Reading from the N-terminus, the 141-residue chain is Nucleoside diphosphate kinase (141 aa).

The ATP site is built by K11, F59, R87, T93, R104, and N114. H117 serves as the catalytic Pros-phosphohistidine intermediate.

The protein belongs to the NDK family. In terms of assembly, homotetramer. Mg(2+) is required as a cofactor.

The protein localises to the cytoplasm. The catalysed reaction is a 2'-deoxyribonucleoside 5'-diphosphate + ATP = a 2'-deoxyribonucleoside 5'-triphosphate + ADP. It catalyses the reaction a ribonucleoside 5'-diphosphate + ATP = a ribonucleoside 5'-triphosphate + ADP. In terms of biological role, major role in the synthesis of nucleoside triphosphates other than ATP. The ATP gamma phosphate is transferred to the NDP beta phosphate via a ping-pong mechanism, using a phosphorylated active-site intermediate. The protein is Nucleoside diphosphate kinase of Albidiferax ferrireducens (strain ATCC BAA-621 / DSM 15236 / T118) (Rhodoferax ferrireducens).